The primary structure comprises 335 residues: Ketol-acid reductoisomerase (NADP(+)) (335 aa).

The 181-residue stretch at 2-182 (AKIIYDNETT…GATRAGVYET (181 aa)) folds into the KARI N-terminal Rossmann domain. NADP(+) contacts are provided by residues 25 to 28 (YGSQ), Arg48, Ser51, Ser53, and 83 to 86 (DENQ). The active site involves His108. Gly134 contributes to the NADP(+) binding site. In terms of domain architecture, KARI C-terminal knotted spans 183–328 (TFREETETDL…KQIRANIPWL (146 aa)). 4 residues coordinate Mg(2+): Asp191, Glu195, Glu227, and Glu231. Ser252 is a binding site for substrate.

It belongs to the ketol-acid reductoisomerase family. Mg(2+) is required as a cofactor.

It carries out the reaction (2R)-2,3-dihydroxy-3-methylbutanoate + NADP(+) = (2S)-2-acetolactate + NADPH + H(+). The catalysed reaction is (2R,3R)-2,3-dihydroxy-3-methylpentanoate + NADP(+) = (S)-2-ethyl-2-hydroxy-3-oxobutanoate + NADPH + H(+). Its pathway is amino-acid biosynthesis; L-isoleucine biosynthesis; L-isoleucine from 2-oxobutanoate: step 2/4. It participates in amino-acid biosynthesis; L-valine biosynthesis; L-valine from pyruvate: step 2/4. Its function is as follows. Involved in the biosynthesis of branched-chain amino acids (BCAA). Catalyzes an alkyl-migration followed by a ketol-acid reduction of (S)-2-acetolactate (S2AL) to yield (R)-2,3-dihydroxy-isovalerate. In the isomerase reaction, S2AL is rearranged via a Mg-dependent methyl migration to produce 3-hydroxy-3-methyl-2-ketobutyrate (HMKB). In the reductase reaction, this 2-ketoacid undergoes a metal-dependent reduction by NADPH to yield (R)-2,3-dihydroxy-isovalerate. This Methanosarcina barkeri (strain Fusaro / DSM 804) protein is Ketol-acid reductoisomerase (NADP(+)).